Consider the following 157-residue polypeptide: Transcription elongation factor GreA (157 aa).

This sequence belongs to the GreA/GreB family.

In terms of biological role, necessary for efficient RNA polymerase transcription elongation past template-encoded arresting sites. The arresting sites in DNA have the property of trapping a certain fraction of elongating RNA polymerases that pass through, resulting in locked ternary complexes. Cleavage of the nascent transcript by cleavage factors such as GreA or GreB allows the resumption of elongation from the new 3'terminus. GreA releases sequences of 2 to 3 nucleotides. The protein is Transcription elongation factor GreA of Maricaulis maris (strain MCS10) (Caulobacter maris).